The primary structure comprises 234 residues: Immune-associated nucleotide-binding protein 2 (234 aa).

In terms of domain architecture, AIG1-type G spans 21–223; sequence KPVKNIVLVG…YTEDMYRNIK (203 aa). GTP is bound by residues 30–38, serine 51, and asparagine 183; that span reads GRSVNGICT.

Belongs to the TRAFAC class TrmE-Era-EngA-EngB-Septin-like GTPase superfamily. AIG1/Toc34/Toc159-like paraseptin GTPase family. IAN subfamily. As to expression, mostly expressed in pollen. Also detected in lateral roots and radicles.

The chain is Immune-associated nucleotide-binding protein 2 from Arabidopsis thaliana (Mouse-ear cress).